The sequence spans 483 residues: Malonate-semialdehyde dehydrogenase 2 (483 aa).

NAD(+)-binding residues include F152, K176, E179, R180, and S229. C284 functions as the Nucleophile in the catalytic mechanism. E384 is an NAD(+) binding site.

It belongs to the aldehyde dehydrogenase family. IolA subfamily. Homotetramer.

The enzyme catalyses 3-oxopropanoate + NAD(+) + CoA + H2O = hydrogencarbonate + acetyl-CoA + NADH + H(+). It catalyses the reaction 2-methyl-3-oxopropanoate + NAD(+) + CoA + H2O = propanoyl-CoA + hydrogencarbonate + NADH + H(+). Its pathway is polyol metabolism; myo-inositol degradation into acetyl-CoA; acetyl-CoA from myo-inositol: step 7/7. Its function is as follows. Catalyzes the oxidation of malonate semialdehyde (MSA) and methylmalonate semialdehyde (MMSA) into acetyl-CoA and propanoyl-CoA, respectively. Is involved in a myo-inositol catabolic pathway. Bicarbonate, and not CO2, is the end-product of the enzymatic reaction. This Geobacillus thermodenitrificans (strain NG80-2) protein is Malonate-semialdehyde dehydrogenase 2.